Here is a 340-residue protein sequence, read N- to C-terminus: Ferredoxin--NADP reductase (340 aa).

The FAD site is built by Asp-33, Gln-41, Tyr-46, Ala-86, Phe-120, Asp-286, and Thr-327.

It belongs to the ferredoxin--NADP reductase type 2 family. In terms of assembly, homodimer. FAD is required as a cofactor.

It catalyses the reaction 2 reduced [2Fe-2S]-[ferredoxin] + NADP(+) + H(+) = 2 oxidized [2Fe-2S]-[ferredoxin] + NADPH. This is Ferredoxin--NADP reductase from Rickettsia rickettsii (strain Iowa).